A 291-amino-acid chain; its full sequence is Kidney mitochondrial carrier protein 1 (291 aa).

At S2 the chain carries N-acetylserine. Solcar repeat units lie at residues 7–96, 104–189, and 198–289; these read KPFV…LKRL, ETLL…TKKH, and DTVS…LKKL. A run of 6 helical transmembrane segments spans residues 9-26, 71-89, 106-124, 164-183, 204-224, and 264-283; these read FVYG…TFPI, GIAP…KIGT, LLIN…SAIA, GVSL…LPVY, FLSS…VDVV, and GFWP…FLTY.

It belongs to the mitochondrial carrier (TC 2.A.29) family. In terms of assembly, interacts with VDAC1.

Its subcellular location is the mitochondrion inner membrane. It carries out the reaction sulfite(in) + sulfate(out) = sulfite(out) + sulfate(in). It catalyses the reaction thiosulfate(in) + sulfate(out) = thiosulfate(out) + sulfate(in). The enzyme catalyses sulfate(out) + phosphate(in) = sulfate(in) + phosphate(out). The catalysed reaction is oxalate(in) + sulfate(out) = oxalate(out) + sulfate(in). It carries out the reaction malonate(in) + sulfate(out) = malonate(out) + sulfate(in). It catalyses the reaction maleate(in) + sulfate(out) = maleate(out) + sulfate(in). The enzyme catalyses (S)-malate(in) + sulfate(out) = (S)-malate(out) + sulfate(in). The catalysed reaction is (3S)-citramalate(in) + sulfate(out) = (3S)-citramalate(out) + sulfate(in). It carries out the reaction (3R)-citramalate(in) + sulfate(out) = (3R)-citramalate(out) + sulfate(in). It catalyses the reaction sulfate(out) + succinate(in) = sulfate(in) + succinate(out). The enzyme catalyses (S,S)-tartrate(in) + sulfate(out) = (S,S)-tartrate(out) + sulfate(in). The catalysed reaction is (2R,3R)-tartrate(in) + sulfate(out) = (2R,3R)-tartrate(out) + sulfate(in). It carries out the reaction D-aspartate(in) + sulfate(out) = D-aspartate(out) + sulfate(in). It catalyses the reaction L-aspartate(in) + sulfate(out) = L-aspartate(out) + sulfate(in). The enzyme catalyses sulfate(in) = sulfate(out). The catalysed reaction is phosphate(in) = phosphate(out). It carries out the reaction (S)-malate(out) = (S)-malate(in). Functionally, antiporter that transports inorganic anions (sulfate, sulfite, thiosulfate and phosphate) and, to a lesser extent, a variety of dicarboxylates (e.g. malonate, malate and citramalate) and, even more so, aspartate. The sulfate/sulfate exchange is much higher than the phosphate/phosphate and malate/malate exchanges. The transport affinities is higher for sulfate and thiosulfate than for any other substrate. May catalyze the export of sulfite and thiosulfate (the hydrogen sulfide degradation products) from the mitochondria, thereby modulating the level of the hydrogen sulfide. Also may mediate a very low unidirectional transport of sulfate, phosphate and (S)-malate. The protein is Kidney mitochondrial carrier protein 1 of Rattus norvegicus (Rat).